Consider the following 152-residue polypeptide: Probable prefoldin subunit 5 (152 aa).

This sequence belongs to the prefoldin subunit alpha family. Heterohexamer of two PFD-alpha type and four PFD-beta type subunits.

Binds specifically to cytosolic chaperonin (c-CPN) and transfers target proteins to it. Binds to nascent polypeptide chain and promotes folding in an environment in which there are many competing pathways for nonnative proteins. The sequence is that of Probable prefoldin subunit 5 (pfd-5) from Caenorhabditis elegans.